Consider the following 124-residue polypeptide: Small ribosomal subunit protein bS16 (124 aa).

Residues 82 to 124 (LAKRPARSNPTKAVPGKKAQERAAEAKQKAEDAAAAAAESAAE) are disordered. Over residues 99–113 (KAQERAAEAKQKAED) the composition is skewed to basic and acidic residues. The segment covering 114-124 (AAAAAAESAAE) has biased composition (low complexity).

Belongs to the bacterial ribosomal protein bS16 family.

The polypeptide is Small ribosomal subunit protein bS16 (Sinorhizobium fredii (strain NBRC 101917 / NGR234)).